The chain runs to 427 residues: Flavohemoprotein (427 aa).

Residues 30-168 (ELNESQKQYI…LAKILIDSEK (139 aa)) form the Globin domain. His114 is a binding site for heme b. Residues Tyr124 and Glu167 each act as charge relay system in the active site. The reductase stretch occupies residues 176-427 (WNGFVEFKVT…QSEFFGPYIP (252 aa)). The region spanning 177–285 (NGFVEFKVTE…SPPAGNFVYK (109 aa)) is the FAD-binding FR-type domain. Residues Tyr216 and 232-235 (REYS) each bind FAD. 301 to 306 (GIGITP) provides a ligand contact to NADP(+). 421–424 (FFGP) provides a ligand contact to FAD.

It belongs to the globin family. Two-domain flavohemoproteins subfamily. The protein in the C-terminal section; belongs to the flavoprotein pyridine nucleotide cytochrome reductase family. It depends on FAD as a cofactor. Heme b serves as cofactor.

The protein resides in the cytoplasm. The protein localises to the nucleus. The enzyme catalyses 2 nitric oxide + NADPH + 2 O2 = 2 nitrate + NADP(+) + H(+). It catalyses the reaction 2 nitric oxide + NADH + 2 O2 = 2 nitrate + NAD(+) + H(+). Its function is as follows. Is involved in NO detoxification in an aerobic process, termed nitric oxide dioxygenase (NOD) reaction that utilizes O(2) and NAD(P)H to convert NO to nitrate, which protects the fungus from various noxious nitrogen compounds. Therefore, plays a central role in the inducible response to nitrosative stress. Functionally, in the presence of oxygen and NADH, it has NADH oxidase activity, which leads to the generation of superoxide and H(2)O(2). Under anaerobic conditions, it also exhibits nitric oxide reductase and FAD reductase activities. However, all these reactions are much lower than NOD activity. The chain is Flavohemoprotein from Schizosaccharomyces pombe (strain 972 / ATCC 24843) (Fission yeast).